The chain runs to 488 residues: MAYSQGGGKKKVCYYYDGDIGNYYYGQGHPMKPHRIRMTHNLLLNYGLYRKMEIYRPHKATAEEMTKYHSDEYIKFLRSIRPDNMSEYSKQMQRFNVGEDCPVFDGLFEFCQLSTGGSVAGAVKLNRQQTDMAVNWAGGLHHAKKSEASGFCYVNDIVLAILELLKYHQRVLYIDIDIHHGDGVEEAFYTTDRVMTVSFHKYGEYFPGTGDLRDIGAGKGKYYAVNFPMRDGIDDESYGQIFKPIISKVMEMYQPSAVVLQCGADSLSGDRLGCFNLTVKGHAKCVEVAKTFNLPLLMLGGGGYTIRNVARCWTYETAVALDCEIPNELPYNDYFEYFGPDFKLHISPSNMTNQNTPEYMEKIKQRLFENLRMLPHAPGVQMQAIPEDAVHEDSGDEDGEDPDKRISIRASDKRIACDEEFSDSEDEGEGGRRNVADHKKGAKKARIEEDKKETEDKKTDVKEEDKSKDNSGEKTDPKGAKSEQLSNP.

The interval Lys9 to Asp322 is histone deacetylase. The 1D-myo-inositol 1,4,5,6-tetrakisphosphate site is built by Gly28 and Lys32. At Lys75 the chain carries N6-acetyllysine; alternate. A Glycyl lysine isopeptide (Lys-Gly) (interchain with G-Cter in SUMO2); alternate cross-link involves residue Lys75. Residue His142 is part of the active site. Positions 175, 177, 179, 188, 191, 194, 198, and 199 each coordinate Ca(2+). Residues Asp177 and His179 each coordinate Zn(2+). An N6-acetyllysine modification is found at Lys221. Position 223 (Tyr223) interacts with Ca(2+). Cys262 is subject to S-nitrosocysteine. Position 265 (Asp265) interacts with Zn(2+). Arg271 contacts 1D-myo-inositol 1,4,5,6-tetrakisphosphate. An S-nitrosocysteine modification is found at Cys274. Positions Ala389–Pro488 are disordered. Residues Ser394, Ser407, Ser422, and Ser424 each carry the phosphoserine modification. Residues Pro402 to Cys417 show a composition bias toward basic and acidic residues. Over residues Asp418–Gly428 the composition is skewed to acidic residues. Positions Glu429 to Lys481 are enriched in basic and acidic residues. Residues Lys439, Lys452, Lys458, Lys462, Lys478, and Lys481 each participate in a glycyl lysine isopeptide (Lys-Gly) (interchain with G-Cter in SUMO2) cross-link.

The protein belongs to the histone deacetylase family. HD type 1 subfamily. In terms of assembly, part of the core histone deacetylase (HDAC) complex composed of HDAC1, HDAC2, RBBP4 and RBBP7, the core complex associates with SIN3, SAP18 and SAP30 to form the SIN3 HDAC complex. Component of the nucleosome remodeling and deacetylase (NuRD) repressor complex, composed of core proteins MTA1, MTA2, MTA3, RBBP4, RBBP7, HDAC1, HDAC2, MBD2, MBD3, and peripherally associated proteins CDK2AP1, CDK2AP2, GATAD2A, GATAD2B, CHD3, CHD4 and CHD5. The exact stoichiometry of the NuRD complex is unknown, and some subunits such as MBD2 and MBD3, GATAD2A and GATAD2B, and CHD3, CHD4 and CHD5 define mutually exclusive NuRD complexes. Component of a RCOR/GFI/KDM1A/HDAC complex. Component of a BHC histone deacetylase complex that contains HDAC1, HDAC2, HMG20B, KDM1A, RCOR1 and PHF21A. The BHC complex may also contain ZMYM2, ZNF217, ZMYM3, GSE1 and GTF2I. Part of a complex containing the core histones H2A, H2B, H3 and H4, DEK and unphosphorylated DAXX. Part of a complex containing ATR and CHD4. Forms a heterologous complex at least with YY1. Interacts in the late S-phase of DNA-replication with DNMT1 in the other transcriptional repressor complex composed of DNMT1, DMAP1, PCNA, CAF1. Component of a mSin3A corepressor complex that contains SIN3A, SAP130, SUDS3, ARID4B, HDAC1 and HDAC2. Part of a complex composed of TRIM28, HDAC1, HDAC2 and EHMT2. Part of a complex containing at least CDYL, MIER1, MIER2, HDAC1 and HDAC2. Component of a histone deacetylase complex containing DNTTIP1, ZNF541, HDAC1 and HDAC2. Forms a complex comprising APPL1, RUVBL2, APPL2, CTNNB1 and HDAC1. Interacts directly with GFI1. Interacts directly with GFI1B. Interacts with APEX1; the interaction is not dependent on the acetylated status of APEX1. Interacts with ATR. Interacts with BCL6 (non-acetylated form). Interacts with BEND3. Interacts with CBFA2T3. Interacts with CDK2AP1. Interacts with CHD4. Interacts with CHD5. Interacts with CHFR. Interacts with CRY1. Interacts with DNMT1. Interacts with GATAD2A. Interacts with HCFC1. Interacts with HDAC7. Interacts with HDAC10. Interacts with INSM1. Interacts with KDM4A. Interacts with MACROH2A1 (via the non-histone region). Interacts with MBD3L2. Interacts with MTA1, with a preference for sumoylated MTA1. Interacts with NACC2. Interacts with NRIP1. Interacts with PELP1. Interacts with PIMREG. Interacts with PRDM6. Interacts with PWWP2B Interacts with SAP30. Interacts with SAP30L. Interacts with SETDB1. Interacts with SIX3. Interacts with SMARCAD1. Interacts with SNW1. Interacts with SPHK2. Interacts with SPEN/MINT. Interacts (CK2 phosphorylated form) with SP3. Interacts with SUV39H1. Interacts with TSHZ3 (via its N-terminus). Interacts with ZMYND8. Interacts with ZNF431. Interacts with ZNF263; recruited to the SIX3 promoter along with other proteins involved in chromatin modification and transcriptional corepression where it contributes to transcriptional repression. Identified in a complex with HDAC1, KCTD19, DNTTIP1 and ZNF541. Component of the SIN3B complex, which includes SIN3B, HDAC2, PHF12 and MORF4L1; interacts directly with all subunits. It depends on Zn(2+) as a cofactor. Ca(2+) is required as a cofactor. S-nitrosylated by GAPDH. In neurons, S-nitrosylation at Cys-262 and Cys-274 does not affect enzyme activity, but induces HDAC2 release from chromatin. This in turn increases acetylation of histones surrounding neurotrophin-dependent gene promoters and promotes their transcription. In embryonic cortical neurons, S-Nitrosylation regulates dendritic growth and branching.

The protein resides in the nucleus. It is found in the cytoplasm. It carries out the reaction N(6)-acetyl-L-lysyl-[histone] + H2O = L-lysyl-[histone] + acetate. The enzyme catalyses N(6)-acetyl-L-lysyl-[protein] + H2O = L-lysyl-[protein] + acetate. The catalysed reaction is N(6)-(2E)-butenoyl-L-lysyl-[protein] + H2O = (2E)-2-butenoate + L-lysyl-[protein]. It catalyses the reaction N(6)-(2-hydroxyisobutanoyl)-L-lysyl-[protein] + H2O = 2-hydroxy-2-methylpropanoate + L-lysyl-[protein]. It carries out the reaction N(6)-[(S)-lactoyl]-L-lysyl-[protein] + H2O = (S)-lactate + L-lysyl-[protein]. Its activity is regulated as follows. Inositol tetraphosphate (1D-myo-inositol 1,4,5,6-tetrakisphosphate) may act as an intermolecular glue between HDAC2 and N-Cor repressor complex components. Histone deacetylase that catalyzes the deacetylation of lysine residues on the N-terminal part of the core histones (H2A, H2B, H3 and H4). Histone deacetylation gives a tag for epigenetic repression and plays an important role in transcriptional regulation, cell cycle progression and developmental events. Histone deacetylases act via the formation of large multiprotein complexes. Forms transcriptional repressor complexes by associating with MAD, SIN3, YY1 and N-COR. Component of a RCOR/GFI/KDM1A/HDAC complex that suppresses, via histone deacetylase (HDAC) recruitment, a number of genes implicated in multilineage blood cell development. Acts as a component of the histone deacetylase NuRD complex which participates in the remodeling of chromatin. Component of the SIN3B complex that represses transcription and counteracts the histone acetyltransferase activity of EP300 through the recognition H3K27ac marks by PHF12 and the activity of the histone deacetylase HDAC2. Also deacetylates non-histone targets: deacetylates TSHZ3, thereby regulating its transcriptional repressor activity. May be involved in the transcriptional repression of circadian target genes, such as PER1, mediated by CRY1 through histone deacetylation. Involved in MTA1-mediated transcriptional corepression of TFF1 and CDKN1A. In addition to protein deacetylase activity, also acts as a protein-lysine deacylase by recognizing other acyl groups: catalyzes removal of (2E)-butenoyl (crotonyl), lactoyl (lactyl) and 2-hydroxyisobutanoyl (2-hydroxyisobutyryl) acyl groups from lysine residues, leading to protein decrotonylation, delactylation and de-2-hydroxyisobutyrylation, respectively. This Mus musculus (Mouse) protein is Histone deacetylase 2.